Here is a 609-residue protein sequence, read N- to C-terminus: Tyrosyl-DNA phosphodiesterase 1 (609 aa).

Positions 1–12 (MSQESSYGKWTI) are enriched in polar residues. Residues 1–154 (MSQESSYGKW…EYETSGEGQD (154 aa)) are disordered. Phosphoserine is present on residues Ser61, Ser119, and Ser132. The segment covering 127–143 (KVEDRSPPDSHRAQRAD) has biased composition (basic and acidic residues). A Phosphothreonine modification is found at Thr148. Phosphoserine is present on Ser149. The Nucleophile role is filled by His264. Residue Lys266 participates in substrate binding. The interaction with DNA stretch occupies residues 401 to 404 (SIGS). The active-site Proton donor/acceptor is His494. Lys496 is a binding site for substrate.

The protein belongs to the tyrosyl-DNA phosphodiesterase family. As to quaternary structure, monomer.

The protein localises to the nucleus. It is found in the cytoplasm. DNA repair enzyme that can remove a variety of covalent adducts from DNA through hydrolysis of a 3'-phosphodiester bond, giving rise to DNA with a free 3' phosphate. Catalyzes the hydrolysis of dead-end complexes between DNA and the topoisomerase I active site tyrosine residue. Hydrolyzes 3'-phosphoglycolates on protruding 3' ends on DNA double-strand breaks due to DNA damage by radiation and free radicals. Acts on blunt-ended double-strand DNA breaks and on single-stranded DNA. Has low 3'exonuclease activity and can remove a single nucleoside from the 3'end of DNA and RNA molecules with 3'hydroxyl groups. Has no exonuclease activity towards DNA or RNA with a 3'phosphate. This is Tyrosyl-DNA phosphodiesterase 1 (Tdp1) from Rattus norvegicus (Rat).